Reading from the N-terminus, the 712-residue chain is Copper amine oxidase 1 (712 aa).

319–330 (AFDLGEYGAGYL) contributes to the substrate binding site. Aspartate 321 acts as the Proton acceptor in catalysis. A disulfide bridge connects residues cysteine 340 and cysteine 366. 404–409 (AANYEY) contributes to the substrate binding site. The Schiff-base intermediate with substrate; via topaquinone role is filled by tyrosine 407. Tyrosine 407 is modified (2',4',5'-topaquinone). Positions 458 and 460 each coordinate Cu cation. Mn(2+) contacts are provided by aspartate 616 and isoleucine 617. Cu cation is bound at residue histidine 627.

This sequence belongs to the copper/topaquinone oxidase family. As to quaternary structure, homodimer. Requires Cu cation as cofactor. It depends on Zn(2+) as a cofactor. L-topaquinone is required as a cofactor. Mn(2+) serves as cofactor. Topaquinone (TPQ) is generated by copper-dependent autoxidation of a specific tyrosyl residue.

It localises to the cytoplasm. It catalyses the reaction a primary methyl amine + O2 + H2O = an aldehyde + H2O2 + NH4(+). In terms of biological role, copper amine oxidase involved in the metabolism of xenobiotic and biogenic amines. Capable of catalyzing the oxidative deamination of primary amines such as ethylamine as alternate sources of nitrogen to support growth. This Schizosaccharomyces pombe (strain 972 / ATCC 24843) (Fission yeast) protein is Copper amine oxidase 1 (cao1).